The primary structure comprises 696 residues: HIPL2 protein (696 aa).

An N-terminal signal peptide occupies residues 1–24 (MAKTNQAITICSLLLLLLLSETTS). Residues asparagine 38, asparagine 69, asparagine 74, asparagine 108, asparagine 124, asparagine 148, asparagine 175, asparagine 339, asparagine 431, asparagine 513, asparagine 519, asparagine 528, asparagine 581, and asparagine 651 are each glycosylated (N-linked (GlcNAc...) asparagine). Serine 672 carries the GPI-anchor amidated serine lipid modification. A propeptide spans 673–696 (SARKLCFSVFLLLSLLMMFLTLLD) (removed in mature form).

Belongs to the PQQ oxidoreductase GdhB family. Pyrroloquinoline quinone is required as a cofactor.

Its subcellular location is the cell membrane. The sequence is that of HIPL2 protein (HIPL2) from Arabidopsis thaliana (Mouse-ear cress).